The chain runs to 409 residues: MDKLLDRFFNYVSFDTQSKANVKHVPSTDGQMKLARALQQEMIELGFERVSLSEHGCVMGTLPGNVAWSVPAIGFISHLDTSPDFTGKHVNPQIVESYRGGDIALGIGDEVLSPVMFPILHQMLGQTLITTDGKTLLGADDKAGIAEILTAMVRLQQRNIPHGDIRVAFTPDEEVGKGARFFDVAQFNAEWAYTVDGGGVGELECENFNAASVTVKIVGNNVHPGSAKGVMVNALSLATRIQQALPADETPETTADYQGFYHLSSLKGSVERAEMHYILRDFEREGFEARKRRMFEVAKQVGKGLPRDCYIEVTIEDSYYNMREQVAEHPHVIALAQQAMRDCDIEPVMKPIRGGTDGAQLSFRGLPCPNLFTGGYNYHCKHEFVSLEGMEQAVAVIMRIAALTAERAK.

Zn(2+) is bound at residue His78. The active site involves Asp80. Asp140 is a Zn(2+) binding site. Glu173 acts as the Proton acceptor in catalysis. The Zn(2+) site is built by Glu174, Asp196, and His379.

The protein belongs to the peptidase M20B family. Requires Zn(2+) as cofactor.

The protein resides in the cytoplasm. It catalyses the reaction Release of the N-terminal residue from a tripeptide.. Cleaves the N-terminal amino acid of tripeptides. The polypeptide is Peptidase T (Serratia proteamaculans (strain 568)).